We begin with the raw amino-acid sequence, 544 residues long: Probable protein kinase UbiB (544 aa).

A Protein kinase domain is found at 123–505 (EFDEQALASA…GRQKSHNVRS (383 aa)). ATP-binding positions include 129 to 137 (LASASIAQV) and Lys156. The active-site Proton acceptor is Asp291. Residues 522 to 540 (LPLWLSCGTLVTVLLVLLL) traverse the membrane as a helical segment.

This sequence belongs to the ABC1 family. UbiB subfamily.

It localises to the cell inner membrane. It participates in cofactor biosynthesis; ubiquinone biosynthesis [regulation]. Functionally, is probably a protein kinase regulator of UbiI activity which is involved in aerobic coenzyme Q (ubiquinone) biosynthesis. The polypeptide is Probable protein kinase UbiB (Actinobacillus pleuropneumoniae serotype 7 (strain AP76)).